Reading from the N-terminus, the 263-residue chain is 1-(5-phosphoribosyl)-5-[(5-phosphoribosylamino)methylideneamino] imidazole-4-carboxamide isomerase (263 aa).

Belongs to the HisA/HisF family.

Its subcellular location is the cytoplasm. It carries out the reaction 1-(5-phospho-beta-D-ribosyl)-5-[(5-phospho-beta-D-ribosylamino)methylideneamino]imidazole-4-carboxamide = 5-[(5-phospho-1-deoxy-D-ribulos-1-ylimino)methylamino]-1-(5-phospho-beta-D-ribosyl)imidazole-4-carboxamide. Its pathway is amino-acid biosynthesis; L-histidine biosynthesis; L-histidine from 5-phospho-alpha-D-ribose 1-diphosphate: step 4/9. In Eremothecium gossypii (strain ATCC 10895 / CBS 109.51 / FGSC 9923 / NRRL Y-1056) (Yeast), this protein is 1-(5-phosphoribosyl)-5-[(5-phosphoribosylamino)methylideneamino] imidazole-4-carboxamide isomerase (HIS6).